The sequence spans 98 residues: NADH-ubiquinone oxidoreductase chain 4L (98 aa).

The next 3 membrane-spanning stretches (helical) occupy residues 1–21 (MASI…GVLI), 26–46 (LMST…MMTL), and 59–79 (APLI…ALLV).

It belongs to the complex I subunit 4L family. In terms of assembly, core subunit of respiratory chain NADH dehydrogenase (Complex I) which is composed of 45 different subunits.

The protein resides in the mitochondrion inner membrane. It carries out the reaction a ubiquinone + NADH + 5 H(+)(in) = a ubiquinol + NAD(+) + 4 H(+)(out). Core subunit of the mitochondrial membrane respiratory chain NADH dehydrogenase (Complex I) which catalyzes electron transfer from NADH through the respiratory chain, using ubiquinone as an electron acceptor. Part of the enzyme membrane arm which is embedded in the lipid bilayer and involved in proton translocation. The chain is NADH-ubiquinone oxidoreductase chain 4L (MT-ND4L) from Caenolestes fuliginosus (Shrew opossum).